Reading from the N-terminus, the 439-residue chain is MNPMRVLSLLACLAVAALAKPNGRMDNSVNQALKPSQWLSGSQLEAIPALDDFTIERLENMNLERGAELLQQVYHLSQIHHNVEPNYVPSGIQVYVPKPNGDKTVAPLNEMIQRLKQKQNFGEDEVTIIVTGLPQTSETVKKATRKLVQAYMQRYNLQQQRQHGKNGNQDYQDQSNEQRKNQRTSSEEDYSEEVKNAKTQSGDIIVIDLGSKLNTYERYAMLDIEKTGAKIGKWIVQMVNELDMPFDTIHLIGQNVGAHVAGAAAQEFTRLTGHKLRRVTGLDPSKIVAKSKNTLTGLARGDAEFVDAIHTSVYGMGTPIRSGDVDFYPNGPAAGVPGASNVVEAAMRATRYFAESVRPGNERSFPAVPANSLQQYKQNDGFGKRAYMGIDTAHDLEGDYILQVNPKSPFGRNAPAQKQSSYHGVHQAWNTNQDSKDYQ.

The first 20 residues, 1–20 (MNPMRVLSLLACLAVAALAK), serve as a signal peptide directing secretion. Residues 158–175 (QQQRQHGKNGNQDYQDQS) are compositionally biased toward polar residues. Disordered stretches follow at residues 158–196 (QQQR…EVKN) and 407–439 (KSPF…KDYQ). Residue Y171 is modified to Phosphotyrosine. A phosphoserine mark is found at S175, S185, and S186. The residue at position 190 (Y190) is a Phosphotyrosine. S191 carries the post-translational modification Phosphoserine. Polar residues predominate over residues 416–433 (AQKQSSYHGVHQAWNTNQ). Position 435 is a phosphoserine (S435).

Belongs to the AB hydrolase superfamily. Lipase family. Tyrosine sulfation occurs in the female only and plays an essential functional role. As to expression, expressed in females only.

It localises to the secreted. Its subcellular location is the vesicle. Its function is as follows. Vitellogenin is the major yolk protein of eggs where it is used as a food source during embryogenesis. Along with Yp2 and Yp3, and their receptor yl/yolkless, required for maintenance of microtubule plus-end orientation towards the posterior pole of oocytes. Involved in polarized localization of germ plasm components, such as osk mRNA and vas protein, to the oocyte posterior cortex. Receptor-mediated endocytosis by yl/yolkless is crucial for actin reorganization, mediated by osk isoform A/Long, required to anchor germ plasm components to the oocyte cortex. The sequence is that of Vitellogenin-1 (Yp1) from Drosophila melanogaster (Fruit fly).